A 181-amino-acid chain; its full sequence is Transcription factor bHLH167 (181 aa).

The disordered stretch occupies residues 1 to 22 (MGRAREIGEGNSSSLREQRNLR). The 50-residue stretch at 14–63 (SLREQRNLREKDRRMRMKHLFSILSSHVSPTRKLPVPHLIDQATSYMIQL) folds into the bHLH domain.

The protein belongs to the bHLH protein family.

It is found in the nucleus. This is Transcription factor bHLH167 from Arabidopsis thaliana (Mouse-ear cress).